Reading from the N-terminus, the 382-residue chain is Protein phosphatase 1A (382 aa).

Gly2 is lipidated: N-myristoyl glycine. A PPM-type phosphatase domain is found at 23–291; sequence RYGLSSMQGW…DNMSVILICF (269 aa). Asp60, Gly61, Asp239, and Asp282 together coordinate Mn(2+). Phosphoserine occurs at positions 375 and 377.

Belongs to the PP2C family. As to quaternary structure, monomer. Interacts with SMAD2; the interaction dephosphorylates SMAD2 in its C-terminal SXS motif resulting in disruption of the SMAD2/SMAD4 complex, SMAD2 nuclear export and termination of the TGF-beta-mediated signaling. Interacts with SMAD2; the interaction dephosphorylates SMAD2 in its C-terminal SXS motif resulting in disruption of the SMAD2/SMAD4 complex, SMAD2 nuclear export and termination of the TGF-beta-mediated signaling. Interacts with the phosphorylated form of IKBKB/IKKB. Mg(2+) is required as a cofactor. Mn(2+) serves as cofactor. N-myristoylation is essential for the recognition of its substrates for dephosphorylation.

The protein resides in the nucleus. The protein localises to the cytoplasm. Its subcellular location is the cytosol. It localises to the membrane. The catalysed reaction is O-phospho-L-seryl-[protein] + H2O = L-seryl-[protein] + phosphate. It catalyses the reaction O-phospho-L-threonyl-[protein] + H2O = L-threonyl-[protein] + phosphate. Functionally, enzyme with a broad specificity. Negatively regulates TGF-beta signaling through dephosphorylating SMAD2 and SMAD3, resulting in their dissociation from SMAD4, nuclear export of the SMADs and termination of the TGF-beta-mediated signaling. Dephosphorylates PRKAA1 and PRKAA2. Plays an important role in the termination of TNF-alpha-mediated NF-kappa-B activation through dephosphorylating and inactivating IKBKB/IKKB. The polypeptide is Protein phosphatase 1A (PPM1A) (Bos taurus (Bovine)).